The primary structure comprises 278 residues: Indole-3-glycerol phosphate synthase (278 aa).

Belongs to the TrpC family.

The enzyme catalyses 1-(2-carboxyphenylamino)-1-deoxy-D-ribulose 5-phosphate + H(+) = (1S,2R)-1-C-(indol-3-yl)glycerol 3-phosphate + CO2 + H2O. It participates in amino-acid biosynthesis; L-tryptophan biosynthesis; L-tryptophan from chorismate: step 4/5. The protein is Indole-3-glycerol phosphate synthase of Pseudomonas fluorescens (strain ATCC BAA-477 / NRRL B-23932 / Pf-5).